The sequence spans 241 residues: Ribonuclease PH (241 aa).

Phosphate is bound by residues arginine 89 and 127 to 129 (GTR).

This sequence belongs to the RNase PH family. As to quaternary structure, homohexameric ring arranged as a trimer of dimers.

It carries out the reaction tRNA(n+1) + phosphate = tRNA(n) + a ribonucleoside 5'-diphosphate. Phosphorolytic 3'-5' exoribonuclease that plays an important role in tRNA 3'-end maturation. Removes nucleotide residues following the 3'-CCA terminus of tRNAs; can also add nucleotides to the ends of RNA molecules by using nucleoside diphosphates as substrates, but this may not be physiologically important. Probably plays a role in initiation of 16S rRNA degradation (leading to ribosome degradation) during starvation. This Xanthomonas oryzae pv. oryzae (strain MAFF 311018) protein is Ribonuclease PH.